The sequence spans 384 residues: Formate-dependent phosphoribosylglycinamide formyltransferase (384 aa).

N(1)-(5-phospho-beta-D-ribosyl)glycinamide is bound by residues 14-15 (EL) and glutamate 74. ATP-binding positions include arginine 106, lysine 147, 152 to 157 (SSGKGQ), 187 to 190 (EEFI), and glutamate 195. An ATP-grasp domain is found at 111–300 (RLAAETLGLA…EFALHVRAIL (190 aa)). Glutamate 259 and glutamate 271 together coordinate Mg(2+). N(1)-(5-phospho-beta-D-ribosyl)glycinamide-binding positions include aspartate 278, lysine 348, and 355-356 (RR).

The protein belongs to the PurK/PurT family. In terms of assembly, homodimer.

The catalysed reaction is N(1)-(5-phospho-beta-D-ribosyl)glycinamide + formate + ATP = N(2)-formyl-N(1)-(5-phospho-beta-D-ribosyl)glycinamide + ADP + phosphate + H(+). It participates in purine metabolism; IMP biosynthesis via de novo pathway; N(2)-formyl-N(1)-(5-phospho-D-ribosyl)glycinamide from N(1)-(5-phospho-D-ribosyl)glycinamide (formate route): step 1/1. Catalyzes two reactions: the first one is the production of beta-formyl glycinamide ribonucleotide (GAR) from formate, ATP and beta GAR; the second, a side reaction, is the production of acetyl phosphate and ADP from acetate and ATP. Its function is as follows. Involved in the de novo purine biosynthesis. Catalyzes the transfer of formate to 5-phospho-ribosyl-glycinamide (GAR), producing 5-phospho-ribosyl-N-formylglycinamide (FGAR). Formate is provided by PurU via hydrolysis of 10-formyl-tetrahydrofolate. The sequence is that of Formate-dependent phosphoribosylglycinamide formyltransferase from Bacillus subtilis (strain 168).